The chain runs to 287 residues: Large ribosomal subunit protein uL2 (287 aa).

The segment at 221–287 is disordered; it reads RGSVMNPCDH…SKRSRGGRDS (67 aa). Over residues 258-287 the composition is skewed to basic residues; that stretch reads KTRKRNKPSNKFVLRKRRKTSKRSRGGRDS.

Belongs to the universal ribosomal protein uL2 family. Part of the 50S ribosomal subunit. Forms a bridge to the 30S subunit in the 70S ribosome.

Its function is as follows. One of the primary rRNA binding proteins. Required for association of the 30S and 50S subunits to form the 70S ribosome, for tRNA binding and peptide bond formation. It has been suggested to have peptidyltransferase activity; this is somewhat controversial. Makes several contacts with the 16S rRNA in the 70S ribosome. In Synechococcus sp. (strain WH7803), this protein is Large ribosomal subunit protein uL2.